Here is a 427-residue protein sequence, read N- to C-terminus: Septin-8 (427 aa).

The Septin-type G domain maps to 39–305 (QGFCFNILCV…ELYRRCKLEE (267 aa)). The G1 motif stretch occupies residues 49 to 56 (GETGIGKS). GTP contacts are provided by residues 49 to 56 (GETGIGKS), G104, 185 to 193 (KADTISKSE), G239, and R254. Residues 101-104 (DTVG) are G3 motif. The G4 motif stretch occupies residues 184-187 (AKAD). The stretch at 321 to 409 (QETYEAKRKE…KAAMEALQSQ (89 aa)) forms a coiled coil. The segment at 373 to 427 (RVHQEESKKVEDKRRDLEEEMNSFNRRKAAMEALQSQSFQATSQQPLKKDKDRKN) is disordered. A compositionally biased stretch (basic and acidic residues) spans 374–389 (VHQEESKKVEDKRRDL). The segment covering 406–418 (LQSQSFQATSQQP) has biased composition (polar residues).

This sequence belongs to the TRAFAC class TrmE-Era-EngA-EngB-Septin-like GTPase superfamily. Septin GTPase family.

The protein localises to the cytoplasm. It localises to the cytoskeleton. The protein resides in the synapse. Its subcellular location is the cell projection. It is found in the axon. The protein localises to the cytoplasmic vesicle. It localises to the secretory vesicle. The protein resides in the synaptic vesicle membrane. Its subcellular location is the presynapse. The polypeptide is Septin-8 (Xenopus tropicalis (Western clawed frog)).